The following is a 153-amino-acid chain: Mitotic-spindle organizing protein 2 (153 aa).

Residues lysine 80 to asparagine 153 form a disordered region. 2 stretches are compositionally biased toward polar residues: residues valine 81–proline 99 and lysine 107–arginine 133. The segment covering glycine 134–asparagine 153 has biased composition (low complexity).

Belongs to the MOZART2 family. Part of the gamma-tubulin complex. Interacts with TUBG1.

The protein localises to the cytoplasm. It is found in the cytoskeleton. Its subcellular location is the microtubule organizing center. The protein resides in the centrosome. It localises to the spindle. The sequence is that of Mitotic-spindle organizing protein 2 (mzt2) from Danio rerio (Zebrafish).